A 1042-amino-acid polypeptide reads, in one-letter code: Kinesin-like protein KIN-5A (1042 aa).

Residues Met1–Ser14 are compositionally biased toward low complexity. A disordered region spans residues Met1–Lys45. The span at Ser21–Val31 shows a compositional bias: basic and acidic residues. Polar residues predominate over residues Asp32–Ser41. The 343-residue stretch at Asn50–Ile392 folds into the Kinesin motor domain. Position 136 to 143 (Gly136 to Thr143) interacts with ATP. A coiled-coil region spans residues Thr480–Glu517. The tract at residues Lys1021–Asn1042 is disordered.

This sequence belongs to the TRAFAC class myosin-kinesin ATPase superfamily. Kinesin family. KIN-5/BimC subfamily.

The protein resides in the cytoplasm. The protein localises to the cytoskeleton. It is found in the spindle. Responsible for microtubule translocation. May be important for the organization of phragmoplast-specific arrays of microtubules. Plays an essential role in stabilizing the mitotic spindle. Required during mitotic cytokinesis. The protein is Kinesin-like protein KIN-5A of Arabidopsis thaliana (Mouse-ear cress).